A 328-amino-acid chain; its full sequence is P2Y purinoceptor 6 (328 aa).

Topologically, residues 1 to 27 (MEQDNGTIQAPGLPPTTCVYREDFKRL) are extracellular. Asn-5 carries an N-linked (GlcNAc...) asparagine glycan. A helical transmembrane segment spans residues 28 to 48 (LLTPVYSVVLVVGLPLNICVI). The Cytoplasmic portion of the chain corresponds to 49 to 62 (AQICASRRTLTRSA). A helical transmembrane segment spans residues 63 to 83 (VYTLNLALADLMYACSLPLLI). Topologically, residues 84–101 (YNYARGDHWPFGDLACRF) are extracellular. Cys-99 and Cys-177 are disulfide-bonded. A helical transmembrane segment spans residues 102–122 (VRFLFYANLHGSILFLTCISF). Topologically, residues 123–144 (QRYLGICHPLASWHKRGGRRAA) are cytoplasmic. A helical membrane pass occupies residues 145-165 (WVVCGVVWLAVTAQCLPTAVF). Residues 166–194 (AATGIQRNRTVCYDLSPPILSTRYLPYGM) lie on the Extracellular side of the membrane. N-linked (GlcNAc...) asparagine glycosylation occurs at Asn-173. The helical transmembrane segment at 195–215 (ALTVIGFLLPFIALLACYCRM) threads the bilayer. Residues 216–236 (ARRLCRQDGPAGPVAQERRSK) are Cytoplasmic-facing. Residues 237-257 (AARMAVVVAAVFAISFLPFHI) traverse the membrane as a helical segment. The Extracellular segment spans residues 258-280 (TKTAYLAVRSTPGVSCPVLETFA). Residues 281 to 303 (AAYKGTRPFASVNSVLDPILFYF) traverse the membrane as a helical segment. The Cytoplasmic segment spans residues 304–328 (TQQKFRRQPHDLLQRLTAKWQRQRV).

Belongs to the G-protein coupled receptor 1 family.

It localises to the cell membrane. In terms of biological role, receptor for extracellular UTP &gt; ADP = 2-methylthio-ATP &gt; ADP-beta-S &gt; ATP = ATP-gamma-S. The activity of this receptor is mediated by G proteins which activate a phosphatidylinositol-calcium second messenger system. Functionally coupled to phospholipase C. The sequence is that of P2Y purinoceptor 6 (P2ry6) from Mus musculus (Mouse).